A 197-amino-acid chain; its full sequence is uncharacterized protein (197 aa).

A helical transmembrane segment spans residues S150–L172.

The protein localises to the membrane. This is an uncharacterized protein from Saccharomyces cerevisiae (strain ATCC 204508 / S288c) (Baker's yeast).